A 484-amino-acid polypeptide reads, in one-letter code: Replication factor C large subunit (484 aa).

46–53 (GPPGSGKT) contributes to the ATP binding site. Basic and acidic residues-rich tracts occupy residues 419-432 (VKTE…KTKE), 442-451 (RISEPPEPLK), and 459-478 (KSVE…KKQA). Residues 419 to 484 (VKTETPKKKE…KKQATLDSFF (66 aa)) form a disordered region.

Belongs to the activator 1 small subunits family. RfcL subfamily. As to quaternary structure, heteromultimer composed of small subunits (RfcS) and large subunits (RfcL).

Its function is as follows. Part of the RFC clamp loader complex which loads the PCNA sliding clamp onto DNA. In Methanococcus maripaludis (strain C5 / ATCC BAA-1333), this protein is Replication factor C large subunit.